We begin with the raw amino-acid sequence, 434 residues long: ATP-sensitive inward rectifier potassium channel 14 (434 aa).

Topologically, residues 1-81 (MGLARALRRL…LSDLFTTCVD (81 aa)) are cytoplasmic. Position 79 is an S-nitrosocysteine (cysteine 79). The chain crosses the membrane as a helical span at residues 82–108 (VRWRWMCLLFSCSFLASWLLFGLTFWL). The Extracellular segment spans residues 109–131 (IASLHGDLAAPPPPAPCFSQVAS). Residues 132-148 (FLAAFLFALETQTSIGY) constitute an intramembrane region (helical; Pore-forming). Residues 145 to 150 (SIGYGV) carry the Selectivity filter motif. Residues 149–157 (GVRSVTEEC) lie on the Extracellular side of the membrane. A helical membrane pass occupies residues 158-185 (PAAVAAVVLQCIAGCVLDAFVVGAVMAK). Topologically, residues 186–434 (MAKPKKRNET…TPTLALTLPP (249 aa)) are cytoplasmic. The segment at 398–434 (QEEDEEEDTKEGTSAETPERAASPQALTPTLALTLPP) is disordered. Residues 407–416 (KEGTSAETPE) are compositionally biased toward basic and acidic residues. The segment covering 418–434 (AASPQALTPTLALTLPP) has biased composition (low complexity).

The protein belongs to the inward rectifier-type potassium channel (TC 1.A.2.1) family. KCNJ14 subfamily.

Its subcellular location is the membrane. The catalysed reaction is K(+)(in) = K(+)(out). Its activity is regulated as follows. Channel activity is regulated by variations of cytosolic pH; channels are activated by alkaline and inhibited by acidic pH values. Inhibited by Ba(2+) and Cs(+) in a voltage-dependent manner; sensitivity to those inhibitors is lower than in other Kir channels. Inward rectifier potassium channels are characterized by a greater tendency to allow potassium to flow into the cell rather than out of it. Their voltage dependence is regulated by the concentration of extracellular potassium; as external potassium is raised, the voltage range of the channel opening shifts to more positive voltages. In Mus musculus (Mouse), this protein is ATP-sensitive inward rectifier potassium channel 14 (Kcnj14).